The sequence spans 130 residues: Large ribosomal subunit protein bL12 (130 aa).

Belongs to the bacterial ribosomal protein bL12 family. In terms of assembly, homodimer. Part of the ribosomal stalk of the 50S ribosomal subunit. Forms a multimeric L10(L12)X complex, where L10 forms an elongated spine to which 2 to 4 L12 dimers bind in a sequential fashion. Binds GTP-bound translation factors.

In terms of biological role, forms part of the ribosomal stalk which helps the ribosome interact with GTP-bound translation factors. Is thus essential for accurate translation. The polypeptide is Large ribosomal subunit protein bL12 (Yersinia pestis bv. Antiqua (strain Angola)).